The sequence spans 95 residues: Large ribosomal subunit protein uL23 (95 aa).

It belongs to the universal ribosomal protein uL23 family. Part of the 50S ribosomal subunit. Contacts protein L29, and trigger factor when it is bound to the ribosome.

Its function is as follows. One of the early assembly proteins it binds 23S rRNA. One of the proteins that surrounds the polypeptide exit tunnel on the outside of the ribosome. Forms the main docking site for trigger factor binding to the ribosome. This is Large ribosomal subunit protein uL23 from Geobacillus kaustophilus (strain HTA426).